Consider the following 156-residue polypeptide: Small ribosomal subunit protein uS7 (156 aa).

The protein belongs to the universal ribosomal protein uS7 family. As to quaternary structure, part of the 30S ribosomal subunit. Contacts proteins S9 and S11.

Its function is as follows. One of the primary rRNA binding proteins, it binds directly to 16S rRNA where it nucleates assembly of the head domain of the 30S subunit. Is located at the subunit interface close to the decoding center, probably blocks exit of the E-site tRNA. The chain is Small ribosomal subunit protein uS7 from Coprothermobacter proteolyticus (strain ATCC 35245 / DSM 5265 / OCM 4 / BT).